Here is a 776-residue protein sequence, read N- to C-terminus: Transcription factor MYB3R-1 (776 aa).

The interval Met1–Glu41 is disordered. HTH myb-type domains lie at Ala30–Leu81, Asn82–Ile137, and Asn138–Leu188. 3 consecutive DNA-binding regions (H-T-H motif) follow at residues Trp58 to Leu81, Trp110 to Leu133, and Trp161 to Val184. 3 disordered regions span residues Ser217 to Asp253, Phe364 to Glu384, and Asp401 to His435. Polar residues-rich tracts occupy residues Cys240–Asp253, Phe364–Asp380, and Gly423–Ala432. The Nuclear localization signal motif lies at Lys648–Leu655.

In terms of assembly, component of a DREAM-like complex which modulates a variety of developmentally regulated genes and of the mitotic genes in proliferating and differentiated cells. Expressed ubiquitously at low levels. Expressed in roots, cotyledons, flowers and leaves, especially in vascular tissues.

The protein localises to the nucleus. Transcription factor that binds 5'-AACGG-3' motifs in gene promoters. Transcription activator involved in the regulation of cytokinesis, probably via the activation of several G2/M phase-specific genes transcription (e.g. KNOLLE). Transcription repressor that regulates organ growth. Binds to the promoters of G2/M-specific genes and to E2F target genes to prevent their expression in post-mitotic cells and to restrict the time window of their expression in proliferating cells. Required for the maintenance of diploidy. This Arabidopsis thaliana (Mouse-ear cress) protein is Transcription factor MYB3R-1.